The sequence spans 162 residues: Lectin BRA-3 (162 aa).

Positions 1–24 (MQRSEIVQAVTLLVVVFAITTAEC) are cleaved as a signal peptide. One can recognise a C-type lectin domain in the interval 25 to 152 (TCPGNLDWQE…NKNKNFLCKM (128 aa)). Intrachain disulfides connect cysteine 26–cysteine 39, cysteine 56–cysteine 150, and cysteine 125–cysteine 142.

In terms of assembly, homotetramer; disulfide-linked. Coelemic fluid.

Sugar-binding protein which recognizes specific carbohydrate structures and agglutinates a variety of animal cells by binding to cell-surface glycoproteins and glycolipids. Calcium-dependent lectin. Invertebrate lectins may be involved in defense functions. The sequence is that of Lectin BRA-3 from Megabalanus rosa (Acorn barnacle).